We begin with the raw amino-acid sequence, 124 residues long: Nascent polypeptide-associated complex protein (124 aa).

An NAC-A/B domain is found at 7–74; sequence GLNPRKMKQM…PESRERGDSG (68 aa). Positions 53–124 are disordered; it reads AQGQQTYQVV…DLAAAVQKLE (72 aa). Residues 74-93 show a composition bias toward acidic residues; it reads GSEDDSETESGGEFSEDDVE.

The protein belongs to the NAC-alpha family. In terms of assembly, homodimer. Interacts with the ribosome. Binds ribosomal RNA.

Its function is as follows. Contacts the emerging nascent chain on the ribosome. In Natronomonas pharaonis (strain ATCC 35678 / DSM 2160 / CIP 103997 / JCM 8858 / NBRC 14720 / NCIMB 2260 / Gabara) (Halobacterium pharaonis), this protein is Nascent polypeptide-associated complex protein.